A 76-amino-acid chain; its full sequence is Small ribosomal subunit protein bS18 (76 aa).

Belongs to the bacterial ribosomal protein bS18 family. As to quaternary structure, part of the 30S ribosomal subunit. Forms a tight heterodimer with protein bS6.

Binds as a heterodimer with protein bS6 to the central domain of the 16S rRNA, where it helps stabilize the platform of the 30S subunit. The protein is Small ribosomal subunit protein bS18 of Mesoplasma florum (strain ATCC 33453 / NBRC 100688 / NCTC 11704 / L1) (Acholeplasma florum).